Reading from the N-terminus, the 253-residue chain is Triosephosphate isomerase, cytosolic (253 aa).

Positions 10 and 12 each coordinate substrate. Residue His-96 is the Electrophile of the active site. Glu-166 (proton acceptor) is an active-site residue.

Belongs to the triosephosphate isomerase family. As to quaternary structure, homodimer.

The protein resides in the cytoplasm. It catalyses the reaction D-glyceraldehyde 3-phosphate = dihydroxyacetone phosphate. It participates in carbohydrate biosynthesis; gluconeogenesis. It functions in the pathway carbohydrate degradation; glycolysis; D-glyceraldehyde 3-phosphate from glycerone phosphate: step 1/1. This Secale cereale (Rye) protein is Triosephosphate isomerase, cytosolic.